Here is a 175-residue protein sequence, read N- to C-terminus: NADH-ubiquinone oxidoreductase chain 6 (175 aa).

The next 5 membrane-spanning stretches (helical) occupy residues 1–21 (MMYT…GVSS), 24–44 (SPVY…GIVV), 46–66 (FGGS…MMVV), 86–106 (IVVL…VVYL), and 149–169 (YGCW…FIVI).

This sequence belongs to the complex I subunit 6 family. Core subunit of respiratory chain NADH dehydrogenase (Complex I) which is composed of 45 different subunits.

It is found in the mitochondrion inner membrane. The catalysed reaction is a ubiquinone + NADH + 5 H(+)(in) = a ubiquinol + NAD(+) + 4 H(+)(out). Functionally, core subunit of the mitochondrial membrane respiratory chain NADH dehydrogenase (Complex I) which catalyzes electron transfer from NADH through the respiratory chain, using ubiquinone as an electron acceptor. Essential for the catalytic activity and assembly of complex I. In Dugong dugon (Dugong), this protein is NADH-ubiquinone oxidoreductase chain 6 (MT-ND6).